A 288-amino-acid polypeptide reads, in one-letter code: Thymidylate synthase (288 aa).

Residues arginine 21 and 150-151 (RR) contribute to the dUMP site. Cysteine 170 serves as the catalytic Nucleophile. Residues 190-193 (RSGD), asparagine 201, and 231-233 (HIY) each bind dUMP. Aspartate 193 contacts (6R)-5,10-methylene-5,6,7,8-tetrahydrofolate. Alanine 287 serves as a coordination point for (6R)-5,10-methylene-5,6,7,8-tetrahydrofolate.

This sequence belongs to the thymidylate synthase family. Bacterial-type ThyA subfamily. As to quaternary structure, homodimer.

It is found in the cytoplasm. The enzyme catalyses dUMP + (6R)-5,10-methylene-5,6,7,8-tetrahydrofolate = 7,8-dihydrofolate + dTMP. The protein operates within pyrimidine metabolism; dTTP biosynthesis. In terms of biological role, catalyzes the reductive methylation of 2'-deoxyuridine-5'-monophosphate (dUMP) to 2'-deoxythymidine-5'-monophosphate (dTMP) while utilizing 5,10-methylenetetrahydrofolate (mTHF) as the methyl donor and reductant in the reaction, yielding dihydrofolate (DHF) as a by-product. This enzymatic reaction provides an intracellular de novo source of dTMP, an essential precursor for DNA biosynthesis. This chain is Thymidylate synthase, found in Acholeplasma laidlawii (strain PG-8A).